The sequence spans 153 residues: Large ribosomal subunit protein uL30 (153 aa).

Belongs to the universal ribosomal protein uL30 family. As to quaternary structure, part of the 50S ribosomal subunit.

The protein is Large ribosomal subunit protein uL30 of Methanoculleus marisnigri (strain ATCC 35101 / DSM 1498 / JR1).